Consider the following 1304-residue polypeptide: DNA-directed RNA polymerase subunit beta' (1304 aa).

4 residues coordinate Zn(2+): C60, C62, C75, and C78. Residues D541, D543, and D545 each contribute to the Mg(2+) site. Residues C887, C963, C970, and C973 each coordinate Zn(2+).

Belongs to the RNA polymerase beta' chain family. In terms of assembly, the RNAP catalytic core consists of 2 alpha, 1 beta, 1 beta' and 1 omega subunit. When a sigma factor is associated with the core the holoenzyme is formed, which can initiate transcription. It depends on Mg(2+) as a cofactor. Zn(2+) is required as a cofactor.

It catalyses the reaction RNA(n) + a ribonucleoside 5'-triphosphate = RNA(n+1) + diphosphate. DNA-dependent RNA polymerase catalyzes the transcription of DNA into RNA using the four ribonucleoside triphosphates as substrates. The polypeptide is DNA-directed RNA polymerase subunit beta' (Acidothermus cellulolyticus (strain ATCC 43068 / DSM 8971 / 11B)).